We begin with the raw amino-acid sequence, 451 residues long: MVEQKGNILMKRYEIGKLLGQGSFAKVYHGRNIKNSQSVAIKVIDKEKILKCELMDQIRREISVMNLVRHPCIVQLYEVMATKTKIYFILEYVKGGELFNKVRRGRLKEEVARKYFQQLISAIDFCHSRGVYHRDLKPENLLLDENRNLKISDFGLSALAECKRQDGLLHTTCGTPAYVAPEVINRKGYDGAKADVWACGVILYVLLAGYLPFQDKNVINMYKKICKAEFKWPSWFSSDIRKLLRRILDPNPATRISVSEIMEDPWFRVGLNSDLLNKTIPTDKVDKVVHVDMDSTFGNLSNNINEGKQEAENLTSLNAFDIISLSSGFDLSAMFEDENSKEESKFTSTNTATTITKKLEDVAKNLRLKFLKKNGGLLKMEGSKPGRKGVMSINAEIFQITPDFHLVEFTKINGDTLEYQKVKQEMRPALKDIVWAWQGEQPQPQSLNEQS.

The 255-residue stretch at 13 to 267 (YEIGKLLGQG…VSEIMEDPWF (255 aa)) folds into the Protein kinase domain. ATP contacts are provided by residues 19–27 (LGQGSFAKV) and lysine 42. Aspartate 135 acts as the Proton acceptor in catalysis. Residues 153-182 (DFGLSALAECKRQDGLLHTTCGTPAYVAPE) are activation loop. An NAF domain is found at 304–336 (INEGKQEAENLTSLNAFDIISLSSGFDLSAMFE). A PPI region spans residues 341 to 370 (KEESKFTSTNTATTITKKLEDVAKNLRLKF).

Belongs to the protein kinase superfamily. CAMK Ser/Thr protein kinase family. SNF1 subfamily. It depends on Mn(2+) as a cofactor.

The enzyme catalyses L-seryl-[protein] + ATP = O-phospho-L-seryl-[protein] + ADP + H(+). It carries out the reaction L-threonyl-[protein] + ATP = O-phospho-L-threonyl-[protein] + ADP + H(+). Its function is as follows. CIPK serine-threonine protein kinases interact with CBL proteins. Binding of a CBL protein to the regulatory NAF domain of CIPK protein lead to the activation of the kinase in a calcium-dependent manner. In Oryza sativa subsp. japonica (Rice), this protein is CBL-interacting protein kinase 10 (CIPK10).